A 287-amino-acid polypeptide reads, in one-letter code: ATP phosphoribosyltransferase (287 aa).

This sequence belongs to the ATP phosphoribosyltransferase family. Long subfamily. In terms of assembly, equilibrium between an active dimeric form, an inactive hexameric form and higher aggregates. Interconversion between the various forms is largely reversible and is influenced by the natural substrates and inhibitors of the enzyme. Mg(2+) serves as cofactor.

The protein localises to the cytoplasm. The enzyme catalyses 1-(5-phospho-beta-D-ribosyl)-ATP + diphosphate = 5-phospho-alpha-D-ribose 1-diphosphate + ATP. It functions in the pathway amino-acid biosynthesis; L-histidine biosynthesis; L-histidine from 5-phospho-alpha-D-ribose 1-diphosphate: step 1/9. Its activity is regulated as follows. Feedback inhibited by histidine. In terms of biological role, catalyzes the condensation of ATP and 5-phosphoribose 1-diphosphate to form N'-(5'-phosphoribosyl)-ATP (PR-ATP). Has a crucial role in the pathway because the rate of histidine biosynthesis seems to be controlled primarily by regulation of HisG enzymatic activity. The polypeptide is ATP phosphoribosyltransferase (hisG) (Mycobacterium leprae (strain TN)).